Reading from the N-terminus, the 1088-residue chain is DNA mismatch repair protein MutS (1088 aa).

Residues Pro498 to His579 form a disordered region. Residues Asp537–Glu546 are compositionally biased toward acidic residues. Gly816–Ser823 contacts ATP. Residues Leu1000–Phe1048 are disordered.

Belongs to the DNA mismatch repair MutS family.

Its function is as follows. This protein is involved in the repair of mismatches in DNA. It is possible that it carries out the mismatch recognition step. This protein has a weak ATPase activity. In Roseiflexus castenholzii (strain DSM 13941 / HLO8), this protein is DNA mismatch repair protein MutS.